The chain runs to 347 residues: Indole-3-glycerol phosphate lyase, chloroplastic (347 aa).

Disordered regions lie at residues 1 to 38 (MAFA…TPRR) and 64 to 89 (APPQ…RSRP). Residues 1–53 (MAFAPKTSSSSSLSSALQAAQSPPLLLRRMSSTATPRRRYDAAVVVTTTTTAR) constitute a chloroplast transit peptide. Over residues 8–27 (SSSSSLSSALQAAQSPPLLL) the composition is skewed to low complexity. Residues 64–76 (APPQAPAPAPVPP) show a composition bias toward pro residues.

The protein belongs to the TrpA family. Tetramer of two alpha and two beta chains for the tryptophan synthase activity. Homodimer of alpha chains for the indole-3-glycerol phosphate lyase activity.

The protein resides in the plastid. Its subcellular location is the chloroplast. The catalysed reaction is (1S,2R)-1-C-(indol-3-yl)glycerol 3-phosphate = indole + D-glyceraldehyde 3-phosphate. It carries out the reaction (1S,2R)-1-C-(indol-3-yl)glycerol 3-phosphate + L-serine = D-glyceraldehyde 3-phosphate + L-tryptophan + H2O. It functions in the pathway secondary metabolite biosynthesis; 2,4-dihydroxy-1,4-benzoxazin-3-one biosynthesis; 2,4-dihydroxy-1,4-benzoxazin-3-one from indoleglycerol phosphate: step 1/5. It participates in amino-acid biosynthesis; L-tryptophan biosynthesis; L-tryptophan from chorismate: step 5/5. The alpha subunit is responsible for the aldol cleavage of indoleglycerol phosphate to indole and glyceraldehyde 3-phosphate. In bacteria, tryptophan synthase alpha (TSA) activity is almost completely dependent on formation of an active alpha2beta2 complex with tryptophan synthase beta (TSB), and indole is usually not released during tryptophan synthesis. In maize, the TSA homolog BX1 catalyzes the formation of free indole from indole-3-glycerol phosphate, independently of TSB. This is Indole-3-glycerol phosphate lyase, chloroplastic (BX1) from Zea mays (Maize).